The following is a 571-amino-acid chain: uncharacterized protein (571 aa).

The disordered stretch occupies residues 1–25; that stretch reads MAPSVATSLKAEILPSPRTSSPSSN. One can recognise an FAD-binding FR-type domain in the interval 135–389; sequence FSVFPAPILD…RGLHKNAFAT (255 aa). Positions 447 to 479 are disordered; sequence NPLQKSSDDDASSTVSQQTETEMDSFEVKKDGT.

Belongs to the flavoprotein pyridine nucleotide cytochrome reductase family. FAD serves as cofactor.

This is an uncharacterized protein from Schizosaccharomyces pombe (strain 972 / ATCC 24843) (Fission yeast).